The sequence spans 272 residues: Tryptophan synthase alpha chain (272 aa).

Residues E49 and E60 each act as proton acceptor in the active site.

The protein belongs to the TrpA family. In terms of assembly, tetramer of two alpha and two beta chains.

The enzyme catalyses (1S,2R)-1-C-(indol-3-yl)glycerol 3-phosphate + L-serine = D-glyceraldehyde 3-phosphate + L-tryptophan + H2O. The protein operates within amino-acid biosynthesis; L-tryptophan biosynthesis; L-tryptophan from chorismate: step 5/5. In terms of biological role, the alpha subunit is responsible for the aldol cleavage of indoleglycerol phosphate to indole and glyceraldehyde 3-phosphate. The chain is Tryptophan synthase alpha chain from Legionella pneumophila (strain Corby).